The primary structure comprises 117 residues: Large ribosomal subunit protein eL34 (117 aa).

It belongs to the eukaryotic ribosomal protein eL34 family. In terms of assembly, component of the large ribosomal subunit.

The protein localises to the cytoplasm. It localises to the cytosol. It is found in the endoplasmic reticulum. Component of the large ribosomal subunit. The ribosome is a large ribonucleoprotein complex responsible for the synthesis of proteins in the cell. In Ictalurus punctatus (Channel catfish), this protein is Large ribosomal subunit protein eL34 (rpl34).